A 230-amino-acid chain; its full sequence is Large ribosomal subunit protein uL1 (230 aa).

Belongs to the universal ribosomal protein uL1 family. As to quaternary structure, part of the 50S ribosomal subunit.

Functionally, binds directly to 23S rRNA. The L1 stalk is quite mobile in the ribosome, and is involved in E site tRNA release. Protein L1 is also a translational repressor protein, it controls the translation of the L11 operon by binding to its mRNA. The chain is Large ribosomal subunit protein uL1 from Metamycoplasma arthritidis (strain 158L3-1) (Mycoplasma arthritidis).